The primary structure comprises 418 residues: Outer membrane protein assembly factor BamB (418 aa).

Residues 1–28 form the signal peptide; the sequence is MFHNTCGRKGRFARAMGMALAISVTLSG. Cysteine 29 carries the N-palmitoyl cysteine lipid modification. The S-diacylglycerol cysteine moiety is linked to residue cysteine 29.

It belongs to the BamB family. Part of the Bam complex.

It is found in the cell outer membrane. Part of the outer membrane protein assembly complex, which is involved in assembly and insertion of beta-barrel proteins into the outer membrane. The polypeptide is Outer membrane protein assembly factor BamB (Alteromonas naphthalenivorans).